The primary structure comprises 437 residues: Protein translocase subunit SecY (437 aa).

10 helical membrane passes run 19–39 (LFTLGIIVVYRLGTHIPIPGV), 69–89 (LLQITVFALGIMPYITASIIL), 122–142 (VALAILQGTGLVATARSGALF), 157–177 (IFTTVVMVICMTAGTCVVMWL), 189–209 (GMSILMFISIAATFPSALWAI), 219–239 (WIEFGTVILVGLVMVGLVVFV), 275–295 (GVIPVIFASSLLYIPALIVQF), 318–338 (HIILYFFLIVFFAFFYVAISF), 378–398 (GSLYLGLIALVPTMALAGFGA), and 400–420 (QNFPFGGTSILIIVGVGLETV).

The protein belongs to the SecY/SEC61-alpha family. As to quaternary structure, component of the Sec protein translocase complex. Heterotrimer consisting of SecY, SecE and SecG subunits. The heterotrimers can form oligomers, although 1 heterotrimer is thought to be able to translocate proteins. Interacts with the ribosome. Interacts with SecDF, and other proteins may be involved. Interacts with SecA.

The protein resides in the cell membrane. Its function is as follows. The central subunit of the protein translocation channel SecYEG. Consists of two halves formed by TMs 1-5 and 6-10. These two domains form a lateral gate at the front which open onto the bilayer between TMs 2 and 7, and are clamped together by SecE at the back. The channel is closed by both a pore ring composed of hydrophobic SecY resides and a short helix (helix 2A) on the extracellular side of the membrane which forms a plug. The plug probably moves laterally to allow the channel to open. The ring and the pore may move independently. The polypeptide is Protein translocase subunit SecY (Streptomyces lividans).